The chain runs to 405 residues: L-rhamnonate dehydratase (405 aa).

Residues H33 and R59 each contribute to the substrate site. 3 residues coordinate Mg(2+): D226, E252, and E280. H329 (proton acceptor) is an active-site residue. E349 is a substrate binding site.

It belongs to the mandelate racemase/muconate lactonizing enzyme family. RhamD subfamily. Homooctamer; tetramer of dimers. The cofactor is Mg(2+).

The enzyme catalyses L-rhamnonate = 2-dehydro-3-deoxy-L-rhamnonate + H2O. Catalyzes the dehydration of L-rhamnonate to 2-keto-3-deoxy-L-rhamnonate (KDR). The polypeptide is L-rhamnonate dehydratase (Escherichia coli O81 (strain ED1a)).